The primary structure comprises 212 residues: ATP-dependent dethiobiotin synthetase BioD (212 aa).

10–15 lines the ATP pocket; the sequence is GVGKTF. Residue Thr14 coordinates Mg(2+). Lys36 is an active-site residue. Ser40 serves as a coordination point for substrate. Residues Asp45, 106-109, and 167-168 contribute to the ATP site; these read EGAG and NC. The Mg(2+) site is built by Asp45 and Glu106.

This sequence belongs to the dethiobiotin synthetase family. As to quaternary structure, homodimer. The cofactor is Mg(2+).

Its subcellular location is the cytoplasm. The catalysed reaction is (7R,8S)-7,8-diammoniononanoate + CO2 + ATP = (4R,5S)-dethiobiotin + ADP + phosphate + 3 H(+). It participates in cofactor biosynthesis; biotin biosynthesis; biotin from 7,8-diaminononanoate: step 1/2. Its function is as follows. Catalyzes a mechanistically unusual reaction, the ATP-dependent insertion of CO2 between the N7 and N8 nitrogen atoms of 7,8-diaminopelargonic acid (DAPA, also called 7,8-diammoniononanoate) to form a ureido ring. The polypeptide is ATP-dependent dethiobiotin synthetase BioD (Methanococcus aeolicus (strain ATCC BAA-1280 / DSM 17508 / OCM 812 / Nankai-3)).